A 423-amino-acid polypeptide reads, in one-letter code: D-tagatose-1,6-bisphosphate aldolase subunit GatZ (423 aa).

It belongs to the GatZ/KbaZ family. GatZ subfamily. Forms a complex with GatY.

The protein operates within carbohydrate metabolism; D-tagatose 6-phosphate degradation; D-glyceraldehyde 3-phosphate and glycerone phosphate from D-tagatose 6-phosphate: step 2/2. Component of the tagatose-1,6-bisphosphate aldolase GatYZ that is required for full activity and stability of the Y subunit. Could have a chaperone-like function for the proper and stable folding of GatY. When expressed alone, GatZ does not show any aldolase activity. Is involved in the catabolism of galactitol. The chain is D-tagatose-1,6-bisphosphate aldolase subunit GatZ from Salmonella dublin (strain CT_02021853).